A 316-amino-acid polypeptide reads, in one-letter code: Biotin synthase (316 aa).

A Radical SAM core domain is found at 38-266 (YKGKKIELCA…DKDIRVCGGR (229 aa)). [4Fe-4S] cluster is bound by residues Cys56, Cys60, and Cys63. Residues Ser100, Cys131, Cys191, and Arg261 each contribute to the [2Fe-2S] cluster site.

The protein belongs to the radical SAM superfamily. Biotin synthase family. As to quaternary structure, homodimer. Requires [4Fe-4S] cluster as cofactor. [2Fe-2S] cluster serves as cofactor.

The catalysed reaction is (4R,5S)-dethiobiotin + (sulfur carrier)-SH + 2 reduced [2Fe-2S]-[ferredoxin] + 2 S-adenosyl-L-methionine = (sulfur carrier)-H + biotin + 2 5'-deoxyadenosine + 2 L-methionine + 2 oxidized [2Fe-2S]-[ferredoxin]. It functions in the pathway cofactor biosynthesis; biotin biosynthesis; biotin from 7,8-diaminononanoate: step 2/2. Its function is as follows. Catalyzes the conversion of dethiobiotin (DTB) to biotin by the insertion of a sulfur atom into dethiobiotin via a radical-based mechanism. This chain is Biotin synthase, found in Thermodesulfovibrio yellowstonii (strain ATCC 51303 / DSM 11347 / YP87).